The following is a 471-amino-acid chain: Putative multidrug resistance protein MdtD (471 aa).

The Periplasmic segment spans residues 1–11 (MTDLPDSTRWQ). The helical transmembrane segment at 12-32 (LWIVAFGFFMQSLDTTIVNTA) threads the bilayer. Residues 33–48 (LPSMAQSLGESPLHMH) lie on the Cytoplasmic side of the membrane. A helical transmembrane segment spans residues 49–69 (MVIVSYVLTVAVMLPASGWLA). Over 70-76 (DKVGVRN) the chain is Periplasmic. A helical membrane pass occupies residues 77 to 97 (IFFTAIVLFTLGSLFCALSGT). At 98 to 101 (LNEL) the chain is on the cytoplasmic side. The helical transmembrane segment at 102 to 124 (LLARALQGVGGAMMVPVGRLTVM) threads the bilayer. Residues 125–137 (KIVPREQYMAAMT) are Periplasmic-facing. Residues 138 to 158 (FVTLPGQVGPLLGPALGGLLV) form a helical membrane-spanning segment. Residues 159–164 (EYASWH) are Cytoplasmic-facing. A helical transmembrane segment spans residues 165–185 (WIFLINIPVGIIGAIATLMLM). At 186–196 (PNYTMQTRRFD) the chain is on the periplasmic side. A helical transmembrane segment spans residues 197–217 (LSGFLLLAVGMAVLTLALDGS). Residues 218-224 (KGTGLSP) are Cytoplasmic-facing. The helical transmembrane segment at 225-245 (LTIDGLVAVGVVALVLYLLHA) threads the bilayer. At 246–262 (RNNNRALFSLKLFRTRT) the chain is on the periplasmic side. The helical transmembrane segment at 263–283 (FSLGLAGSFAGRIGSGMLPFM) threads the bilayer. Topologically, residues 284-285 (TP) are cytoplasmic. A helical transmembrane segment spans residues 286-306 (VFLQIGLGFSPFHAGLMMIPM). Residues 307–341 (VLGSMGMKRIVVQVVNRFGYRRVLVATTLGLSLVT) are Periplasmic-facing. The chain crosses the membrane as a helical span at residues 342–362 (LLFMTTALLGWYYVLPFVLFL). The Cytoplasmic segment spans residues 363–395 (QGMVNSTRFSSMNTLTLKDLPDNLASSGNSLLS). A helical membrane pass occupies residues 396–416 (MIMQLSMSIGVTIAGLLLGLF). Topologically, residues 417 to 430 (GSQHVSVDSGTTQT) are periplasmic. The chain crosses the membrane as a helical span at residues 431 to 451 (VFMYTWLSMAFIIALPAFIFA). Residues 452-471 (RVPNDTHQNVAISRRKRSAQ) lie on the Cytoplasmic side of the membrane.

This sequence belongs to the major facilitator superfamily. TCR/Tet family.

It localises to the cell inner membrane. The chain is Putative multidrug resistance protein MdtD from Escherichia coli O8 (strain IAI1).